We begin with the raw amino-acid sequence, 198 residues long: Recombination protein RecR (198 aa).

The C4-type zinc finger occupies 57–72 (CSVCGRLTDDDPCIIC). One can recognise a Toprim domain in the interval 80–175 (TKILVVEDSK…KVTRLARGLA (96 aa)).

It belongs to the RecR family.

May play a role in DNA repair. It seems to be involved in an RecBC-independent recombinational process of DNA repair. It may act with RecF and RecO. The protein is Recombination protein RecR of Streptococcus thermophilus (strain CNRZ 1066).